We begin with the raw amino-acid sequence, 170 residues long: Arginine repressor (170 aa).

This sequence belongs to the ArgR family.

It localises to the cytoplasm. It participates in amino-acid biosynthesis; L-arginine biosynthesis [regulation]. Its function is as follows. Regulates arginine biosynthesis genes. In Bifidobacterium longum (strain NCC 2705), this protein is Arginine repressor.